Consider the following 190-residue polypeptide: Putative transcription factor ovo-like protein 3 (190 aa).

Disordered regions lie at residues 1-21 (MPRAFLVRSRRPQPPNWGHLP) and 35-65 (SLGGPPAQQSSSVRDPWTAQPTQGNLTSAPR). Positions 41 to 62 (AQQSSSVRDPWTAQPTQGNLTS) are enriched in polar residues. 4 C2H2-type zinc fingers span residues 70–92 (LGCPLCPKAFPLQRMLTRHLKCH), 98–120 (HLCRCCGKGFHDAFDLKRHMRTH), 126–149 (FRCSACGKAFTQRCSLEAHLAKVH), and 165–187 (HVCEDCGFTSSRPDTYAQHRALH).

It belongs to the krueppel C2H2-type zinc-finger protein family.

Its subcellular location is the nucleus. Its function is as follows. May act as a transcription regulator. In Homo sapiens (Human), this protein is Putative transcription factor ovo-like protein 3 (OVOL3).